Reading from the N-terminus, the 188-residue chain is UPF0301 protein Tcr_1827 (188 aa).

The protein belongs to the UPF0301 (AlgH) family.

This chain is UPF0301 protein Tcr_1827, found in Hydrogenovibrio crunogenus (strain DSM 25203 / XCL-2) (Thiomicrospira crunogena).